Reading from the N-terminus, the 813-residue chain is Polycomb group protein FERTILIZATION-INDEPENDENT SEED 2 (813 aa).

Residues 1–27 (MARKSIRGKEVVMVSDDDDDDDDVDDD) form a disordered region. Acidic residues predominate over residues 15–26 (SDDDDDDDDVDD). The C2H2-type zinc finger occupies 134 to 155 (CPFCLIPCGGHEGLQLHLKSSH). 3 disordered regions span residues 197–216 (SPLT…DDSN), 232–261 (DLPR…SEKI), and 274–648 (ESSE…RKEL). Basic and acidic residues predominate over residues 232–246 (DLPRGTENDSTHVND). One copy of the A-1 repeat lies at 243–264 (HVNDDNVSSPPRAHSSEKISDI). The interval 243–542 (HVNDDNVSSP…HSSKKNKSTR (300 aa)) is 12 X approximate repeat A. Residues 265–281 (LTTTQLAIAESSEPKVP) form a B-1 repeat. The interval 265-640 (LTTTQLAIAE…KAEPSEPKVT (376 aa)) is 7 X approximate repeat B. Residues 282–304 (HVNDGNVSSPPRAHSSAEKNEST) form an A-2 repeat. Basic and acidic residues-rich tracts occupy residues 296–307 (SSAEKNESTHVN), 319–331 (HSLE…HVNE), and 344–353 (KKNESTHMND). An A-3 repeat occupies 305-327 (HVNDDDDVSSPPRAHSLEKNEST). One copy of the A-4 repeat lies at 328–349 (HVNEDNISSPPKAHSSKKNEST). One copy of the A-5 repeat lies at 350–371 (HMNDEDVSFPPRTRSSKETSDI). The stretch at 372-388 (LTTTQPAIVEPSEPKVR) is one B-2 repeat. Positions 388-402 (RRGSRRKQLYAKRYK) are enriched in basic residues. Residues 403-419 (ARETQPAIAESSEPKVL) form a B-3 repeat. Basic and acidic residues-rich tracts occupy residues 414-423 (SEPKVLHVND) and 453-462 (SEPKVPHVND). The A-6 repeat unit spans residues 420–441 (HVNDENVSSPPEAHSLEKASDI). The B-4 repeat unit spans residues 442-458 (LTTTQPAIAESSEPKVP). One copy of the A-7 repeat lies at 459-481 (HVNDENVSSTPRAHSSKKNKSTR). Basic residues predominate over residues 472–481 (HSSKKNKSTR). An A-8 repeat occupies 482-502 (KNVDNVPSPPKTRSSKKTSDI). The span at 501-512 (DILTTTQPTIAE) shows a compositional bias: polar residues. The B-5 repeat unit spans residues 503 to 519 (LTTTQPTIAESSEPKVR). The segment covering 514-523 (SEPKVRHVND) has biased composition (basic and acidic residues). Residues 520–542 (HVNDDNVSSTPRAHSSKKNKSTR) form an A-9 repeat. An A-10 repeat occupies 543–563 (KNDDNIPSPPKTRSSKKTSNI). The stretch at 564 to 579 (LTRTQPAIAESEPKVP) is one B-6 repeat. Residues 574–586 (SEPKVPHVNDDKV) show a composition bias toward basic and acidic residues. One copy of the A-11 repeat lies at 580–601 (HVNDDKVSSTPRAHSSKKNKST). Over residues 593-602 (HSSKKNKSTH) the composition is skewed to basic residues. An A-12 repeat occupies 602 to 623 (HKKDDNASLPPKTRSSKKTSDI). A B-7 repeat occupies 624-640 (LATTQPAKAEPSEPKVT). Positions 648-783 (LHAERCEAKR…CAKTFHKCTT (136 aa)) are VEFS-box.

This sequence belongs to the VEFS (VRN2-EMF2-FIS2-SU(Z)12) family. Probably indirectly associated with FIE and/or MEA. In plants, PcG complexes are probably composed of a member of the EZ family (CLF or MEA), FIE, and a member of the VEFS family (FIS2, VRN2 or EMF2). As to expression, weakly expressed. Expressed in late siliques.

The protein resides in the nucleus. In terms of biological role, polycomb group (PcG) protein. PcG proteins act by forming multiprotein complexes, which are required to maintain the transcriptionally repressive state of homeotic genes throughout development. PcG proteins are not required to initiate repression, but to maintain it during later stages of development. They probably act via the methylation of histones, rendering chromatin heritably changed in its expressibility. Required to prevent the proliferation of the central cell by repressing unknown target genes before fertilization. Regulates the anteroposterior organization of the endosperm. This Arabidopsis thaliana (Mouse-ear cress) protein is Polycomb group protein FERTILIZATION-INDEPENDENT SEED 2.